Here is a 906-residue protein sequence, read N- to C-terminus: Valine--tRNA ligase (906 aa).

The 'HIGH' region signature appears at 43-53 (PNVTGSLHIGH). Residues 548–552 (KMSKS) carry the 'KMSKS' region motif. K551 contacts ATP. A coiled-coil region spans residues 842–905 (EKARLTKDIA…EAALSRLASV (64 aa)).

This sequence belongs to the class-I aminoacyl-tRNA synthetase family. ValS type 1 subfamily. In terms of assembly, monomer.

The protein resides in the cytoplasm. The catalysed reaction is tRNA(Val) + L-valine + ATP = L-valyl-tRNA(Val) + AMP + diphosphate. Functionally, catalyzes the attachment of valine to tRNA(Val). As ValRS can inadvertently accommodate and process structurally similar amino acids such as threonine, to avoid such errors, it has a 'posttransfer' editing activity that hydrolyzes mischarged Thr-tRNA(Val) in a tRNA-dependent manner. This is Valine--tRNA ligase from Caulobacter vibrioides (strain ATCC 19089 / CIP 103742 / CB 15) (Caulobacter crescentus).